We begin with the raw amino-acid sequence, 541 residues long: Membrane protein insertase YidC (541 aa).

Helical transmembrane passes span 7 to 27 (LFLV…QTDH), 340 to 360 (QLIH…TFIV), 415 to 435 (LGGC…YYML), 453 to 473 (LAAP…MFFI), and 494 to 514 (PVIF…YYIV).

Belongs to the OXA1/ALB3/YidC family. Type 1 subfamily. In terms of assembly, interacts with the Sec translocase complex via SecD. Specifically interacts with transmembrane segments of nascent integral membrane proteins during membrane integration.

The protein localises to the cell inner membrane. Functionally, required for the insertion and/or proper folding and/or complex formation of integral membrane proteins into the membrane. Involved in integration of membrane proteins that insert both dependently and independently of the Sec translocase complex, as well as at least some lipoproteins. Aids folding of multispanning membrane proteins. This chain is Membrane protein insertase YidC, found in Edwardsiella ictaluri (strain 93-146).